A 578-amino-acid chain; its full sequence is Isocitrate dehydrogenase kinase/phosphatase (578 aa).

Residues 315–321 (APGIRGM) and Lys336 contribute to the ATP site. Residue Asp371 is part of the active site.

Belongs to the AceK family.

It localises to the cytoplasm. It catalyses the reaction L-seryl-[isocitrate dehydrogenase] + ATP = O-phospho-L-seryl-[isocitrate dehydrogenase] + ADP + H(+). Bifunctional enzyme which can phosphorylate or dephosphorylate isocitrate dehydrogenase (IDH) on a specific serine residue. This is a regulatory mechanism which enables bacteria to bypass the Krebs cycle via the glyoxylate shunt in response to the source of carbon. When bacteria are grown on glucose, IDH is fully active and unphosphorylated, but when grown on acetate or ethanol, the activity of IDH declines drastically concomitant with its phosphorylation. The sequence is that of Isocitrate dehydrogenase kinase/phosphatase from Shigella boydii serotype 18 (strain CDC 3083-94 / BS512).